A 220-amino-acid polypeptide reads, in one-letter code: Probable septum site-determining protein MinC (220 aa).

It belongs to the MinC family. As to quaternary structure, interacts with MinD and FtsZ.

Cell division inhibitor that blocks the formation of polar Z ring septums. Rapidly oscillates between the poles of the cell to destabilize FtsZ filaments that have formed before they mature into polar Z rings. Prevents FtsZ polymerization. The chain is Probable septum site-determining protein MinC from Photobacterium profundum (strain SS9).